The sequence spans 224 residues: Oxalate oxidase 2 (224 aa).

The signal sequence occupies residues 1-23 (MGYSKTLAVSLFAVLLLAPAVLA). The cysteines at positions 33 and 49 are disulfide-linked. The Cupin type-1 domain occupies 63–214 (SKLAKAGNTS…ALRVEAGVVE (152 aa)). N-linked (GlcNAc...) asparagine glycosylation is found at Asn-70 and Asn-75. The Mn(2+) site is built by His-111, His-113, Glu-118, and His-160.

Belongs to the germin family. In terms of assembly, oligomer (believed to be a pentamer but probably hexamer). In terms of processing, glycosylated. A form called G contains antennary GlcNAc residues, whereas a form called G' lacks antennary GlcNAc residues in its otherwise identical glycans. In terms of tissue distribution, root.

It localises to the secreted. It is found in the extracellular space. Its subcellular location is the apoplast. The protein resides in the cell wall. It carries out the reaction oxalate + O2 + 2 H(+) = H2O2 + 2 CO2. In terms of biological role, releases hydrogen peroxide in the apoplast. May play an important role in several aspects of plant growth and defense mechanisms. This is Oxalate oxidase 2 from Hordeum vulgare (Barley).